The chain runs to 446 residues: tRNA wybutosine-synthesizing protein 2 homolog (446 aa).

S-adenosyl-L-methionine-binding positions include Ser-208, Lys-215, Glu-255, and 283–284 (DN).

The protein belongs to the class I-like SAM-binding methyltransferase superfamily. TRM5/TYW2 family.

It carries out the reaction 4-demethylwyosine(37) in tRNA(Phe) + S-adenosyl-L-methionine = 4-demethyl-7-[(3S)-3-amino-3-carboxypropyl]wyosine(37) in tRNA(Phe) + S-methyl-5'-thioadenosine + H(+). It functions in the pathway tRNA modification; wybutosine-tRNA(Phe) biosynthesis. In terms of biological role, S-adenosyl-L-methionine-dependent transferase that acts as a component of the wybutosine biosynthesis pathway. Wybutosine is a hyper modified guanosine with a tricyclic base found at the 3'-position adjacent to the anticodon of eukaryotic phenylalanine tRNA. Catalyzes the transfer of the alpha-amino-alpha-carboxypropyl (acp) group from S-adenosyl-L-methionine to the C-7 position of 4-demethylwyosine (imG-14) to produce wybutosine-86. The sequence is that of tRNA wybutosine-synthesizing protein 2 homolog (Trmt12) from Mus musculus (Mouse).